A 229-amino-acid polypeptide reads, in one-letter code: NAD(P)H-hydrate epimerase (229 aa).

In terms of domain architecture, YjeF N-terminal spans 10-217 (AINVDQELFN…ALQRKYDLNL (208 aa)). Position 60–64 (60–64 (NNGGD)) interacts with (6S)-NADPHX. Positions 61 and 125 each coordinate K(+). Residues 129 to 135 (GFSFKPP) and aspartate 158 contribute to the (6S)-NADPHX site. Serine 161 is a binding site for K(+).

It belongs to the NnrE/AIBP family. K(+) serves as cofactor.

It catalyses the reaction (6R)-NADHX = (6S)-NADHX. The catalysed reaction is (6R)-NADPHX = (6S)-NADPHX. Catalyzes the epimerization of the S- and R-forms of NAD(P)HX, a damaged form of NAD(P)H that is a result of enzymatic or heat-dependent hydration. This is a prerequisite for the S-specific NAD(P)H-hydrate dehydratase to allow the repair of both epimers of NAD(P)HX. The protein is NAD(P)H-hydrate epimerase of Drosophila ananassae (Fruit fly).